A 54-amino-acid polypeptide reads, in one-letter code: Photosystem II reaction center protein K (54 aa).

A propeptide spanning residues 1-17 (MSFENFAIITLKENVFA) is cleaved from the precursor. The chain crosses the membrane as a helical span at residues 33–53 (LPIIPVLFLLLAFVWQSAVKF).

It belongs to the PsbK family. PSII is composed of 1 copy each of membrane proteins PsbA, PsbB, PsbC, PsbD, PsbE, PsbF, PsbH, PsbI, PsbJ, PsbK, PsbL, PsbM, PsbT, PsbY, PsbZ, Psb30/Ycf12, at least 3 peripheral proteins of the oxygen-evolving complex and a large number of cofactors. It forms dimeric complexes.

It is found in the plastid. The protein resides in the chloroplast thylakoid membrane. Functionally, one of the components of the core complex of photosystem II (PSII). PSII is a light-driven water:plastoquinone oxidoreductase that uses light energy to abstract electrons from H(2)O, generating O(2) and a proton gradient subsequently used for ATP formation. It consists of a core antenna complex that captures photons, and an electron transfer chain that converts photonic excitation into a charge separation. The polypeptide is Photosystem II reaction center protein K (Euglena deses).